Consider the following 535-residue polypeptide: Light-independent protochlorophyllide reductase subunit B (535 aa).

D36 contributes to the [4Fe-4S] cluster binding site. D292 acts as the Proton donor in catalysis. G428–L429 is a binding site for substrate.

This sequence belongs to the ChlB/BchB/BchZ family. In terms of assembly, protochlorophyllide reductase is composed of three subunits; BchL, BchN and BchB. Forms a heterotetramer of two BchB and two BchN subunits. The cofactor is [4Fe-4S] cluster.

It catalyses the reaction chlorophyllide a + oxidized 2[4Fe-4S]-[ferredoxin] + 2 ADP + 2 phosphate = protochlorophyllide a + reduced 2[4Fe-4S]-[ferredoxin] + 2 ATP + 2 H2O. It functions in the pathway porphyrin-containing compound metabolism; bacteriochlorophyll biosynthesis (light-independent). Its function is as follows. Component of the dark-operative protochlorophyllide reductase (DPOR) that uses Mg-ATP and reduced ferredoxin to reduce ring D of protochlorophyllide (Pchlide) to form chlorophyllide a (Chlide). This reaction is light-independent. The NB-protein (BchN-BchB) is the catalytic component of the complex. The sequence is that of Light-independent protochlorophyllide reductase subunit B from Chlorobaculum parvum (strain DSM 263 / NCIMB 8327) (Chlorobium vibrioforme subsp. thiosulfatophilum).